The primary structure comprises 436 residues: Trigger factor (436 aa).

A PPIase FKBP-type domain is found at 163-248 (GDTVVIDFDG…IHEVKEKQLP (86 aa)).

Belongs to the FKBP-type PPIase family. Tig subfamily.

The protein localises to the cytoplasm. It catalyses the reaction [protein]-peptidylproline (omega=180) = [protein]-peptidylproline (omega=0). Its function is as follows. Involved in protein export. Acts as a chaperone by maintaining the newly synthesized protein in an open conformation. Functions as a peptidyl-prolyl cis-trans isomerase. The protein is Trigger factor of Levilactobacillus brevis (strain ATCC 367 / BCRC 12310 / CIP 105137 / JCM 1170 / LMG 11437 / NCIMB 947 / NCTC 947) (Lactobacillus brevis).